The sequence spans 1352 residues: Patatin-like phospholipase domain-containing protein 7 (1352 aa).

Over 1–36 (MQNEEDACLEAGYCLGTTLSSWRLHFMEEQSQSTML) the chain is Lumenal. A helical transmembrane segment spans residues 37 to 57 (MGIGIGALLTLAFVGITFFFV). Residues 58-1352 (YRRVRRLRRA…DQGPRLEHPS (1295 aa)) are Cytoplasmic-facing. 170-297 (VLGHFEKPLF…VRVVQIIMVR (128 aa)) lines the a nucleoside 3',5'-cyclic phosphate pocket. Positions 340–364 (MSYGPEEQLERSLRPSEFSSSDHGS) are disordered. A phosphoserine mark is found at Ser-341 and Ser-379. Positions 384–411 (SNHGEVDELRQSQGSGSNTSAFQESHEG) are disordered. The segment covering 394–406 (QSQGSGSNTSAFQ) has biased composition (polar residues). Residues 499 to 585 (FLHV…YEIM) and 613 to 718 (ALDW…LGEK) contribute to the a nucleoside 3',5'-cyclic phosphate site. Positions 681 to 967 (VHAVRDSELA…RGCAQVGILR (287 aa)) are involved in the binding to lipid droplets. The 167-residue stretch at 950–1116 (LVLGGGGARG…INNLPADVAR (167 aa)) folds into the PNPLA domain. Residues 954–959 (GGGARG) carry the GXGXXG motif. The short motif at 981-985 (GTSIG) is the GXSXG element. The Nucleophile role is filled by Ser-983. The active-site Proton acceptor is the Asp-1103. The DGA/G motif lies at 1103-1105 (DGG). Ser-1280 is subject to Phosphoserine. Position 1284 is a phosphothreonine (Thr-1284). Positions 1295–1352 (KETYADFQSTGIELDSDSEYEPSMLQGPPSLTSPEQSQDSFPWLPNQDDQGPRLEHPS) are disordered. Polar residues predominate over residues 1323–1334 (PSLTSPEQSQDS).

Belongs to the NTE family. Expressed in white and brown adipose tissue, cardiac muscle, skeletal muscle, and testis. In terms of tissue distribution, expressed in white adipose tissue, cardiac muscle, skeletal muscle, and testis.

The protein resides in the endoplasmic reticulum membrane. It localises to the lipid droplet. The enzyme catalyses a 1-acyl-sn-glycero-3-phosphocholine + H2O = sn-glycerol 3-phosphocholine + a fatty acid + H(+). The catalysed reaction is 1-(9Z-octadecenoyl)-sn-glycero-3-phosphocholine + H2O = sn-glycerol 3-phosphocholine + (9Z)-octadecenoate + H(+). It carries out the reaction 1-(9Z-octadecenoyl)-sn-glycero-3-phosphoethanolamine + H2O = sn-glycero-3-phosphoethanolamine + (9Z)-octadecenoate + H(+). It catalyses the reaction 1-(9Z-octadecenoyl)-sn-glycero-3-phospho-L-serine + H2O = sn-glycero-3-phospho-L-serine + (9Z)-octadecenoate + H(+). The enzyme catalyses 1-hexadecanoyl-sn-glycero-3-phosphocholine + H2O = sn-glycerol 3-phosphocholine + hexadecanoate + H(+). The catalysed reaction is 1-hexadecanoyl-sn-glycero-3-phosphate + H2O = sn-glycerol 3-phosphate + hexadecanoate + H(+). With respect to regulation, cAMP does not regulate lysophospholipase activity in vitro. Slightly inhibited by organophosphorus (OP) compounds such as mipafox, which is likely why mice are less sensitive to distal axonophathy induced by OPs compared to humans. In terms of biological role, lysophospholipase which preferentially deacylates unsaturated lysophosphatidylcholine (C18:1), generating glycerophosphocholine. Can also deacylate, to a lesser extent, lysophosphatidylethanolamine (C18:1), lysophosphatidyl-L-serine (C18:1) and lysophosphatidic acid (C16:0). Lysophospholipase. Its function is as follows. Lacks lysophospholipase activity. The sequence is that of Patatin-like phospholipase domain-containing protein 7 (Pnpla7) from Mus musculus (Mouse).